A 415-amino-acid chain; its full sequence is 1-deoxy-D-xylulose 5-phosphate reductoisomerase (415 aa).

NADPH contacts are provided by Thr10, Gly11, Ser12, Ile13, Gly36, Arg37, Asn38, and Asn128. 1-deoxy-D-xylulose 5-phosphate is bound at residue Lys129. Glu130 is an NADPH binding site. Asp154 lines the Mn(2+) pocket. 4 residues coordinate 1-deoxy-D-xylulose 5-phosphate: Ser155, Glu156, Ser192, and His215. Mn(2+) is bound at residue Glu156. Gly221 contacts NADPH. 1-deoxy-D-xylulose 5-phosphate contacts are provided by Ser228, Asn233, Lys234, and Glu237. Glu237 is a binding site for Mn(2+).

It belongs to the DXR family. The cofactor is Mg(2+). Mn(2+) serves as cofactor.

It catalyses the reaction 2-C-methyl-D-erythritol 4-phosphate + NADP(+) = 1-deoxy-D-xylulose 5-phosphate + NADPH + H(+). It participates in isoprenoid biosynthesis; isopentenyl diphosphate biosynthesis via DXP pathway; isopentenyl diphosphate from 1-deoxy-D-xylulose 5-phosphate: step 1/6. Catalyzes the NADPH-dependent rearrangement and reduction of 1-deoxy-D-xylulose-5-phosphate (DXP) to 2-C-methyl-D-erythritol 4-phosphate (MEP). The sequence is that of 1-deoxy-D-xylulose 5-phosphate reductoisomerase from Synechococcus sp. (strain CC9605).